The sequence spans 37 residues: Large ribosomal subunit protein bL36 (37 aa).

Belongs to the bacterial ribosomal protein bL36 family.

In Desulforapulum autotrophicum (strain ATCC 43914 / DSM 3382 / VKM B-1955 / HRM2) (Desulfobacterium autotrophicum), this protein is Large ribosomal subunit protein bL36.